The following is a 213-amino-acid chain: Orotate phosphoribosyltransferase (213 aa).

Lys26 provides a ligand contact to 5-phospho-alpha-D-ribose 1-diphosphate. An orotate-binding site is contributed by 34-35 (FF). 5-phospho-alpha-D-ribose 1-diphosphate is bound by residues 72–73 (YK), Arg99, Lys100, Lys103, His105, and 124–132 (DDVITAGTA). Orotate-binding residues include Thr128 and Arg156.

It belongs to the purine/pyrimidine phosphoribosyltransferase family. PyrE subfamily. Homodimer. The cofactor is Mg(2+).

The enzyme catalyses orotidine 5'-phosphate + diphosphate = orotate + 5-phospho-alpha-D-ribose 1-diphosphate. It functions in the pathway pyrimidine metabolism; UMP biosynthesis via de novo pathway; UMP from orotate: step 1/2. In terms of biological role, catalyzes the transfer of a ribosyl phosphate group from 5-phosphoribose 1-diphosphate to orotate, leading to the formation of orotidine monophosphate (OMP). The protein is Orotate phosphoribosyltransferase of Aliivibrio fischeri (strain MJ11) (Vibrio fischeri).